The following is a 121-amino-acid chain: Ribosome-binding factor A (121 aa).

Belongs to the RbfA family. In terms of assembly, monomer. Binds 30S ribosomal subunits, but not 50S ribosomal subunits or 70S ribosomes.

Its subcellular location is the cytoplasm. In terms of biological role, one of several proteins that assist in the late maturation steps of the functional core of the 30S ribosomal subunit. Associates with free 30S ribosomal subunits (but not with 30S subunits that are part of 70S ribosomes or polysomes). Required for efficient processing of 16S rRNA. May interact with the 5'-terminal helix region of 16S rRNA. The chain is Ribosome-binding factor A from Paraburkholderia xenovorans (strain LB400).